Here is a 244-residue protein sequence, read N- to C-terminus: Small ribosomal subunit protein eS4 (244 aa).

Residues 43 to 106 (LPLLLVVRDV…DENYLVLFDE (64 aa)) form the S4 RNA-binding domain.

This sequence belongs to the eukaryotic ribosomal protein eS4 family.

In Methanococcus maripaludis (strain C7 / ATCC BAA-1331), this protein is Small ribosomal subunit protein eS4.